We begin with the raw amino-acid sequence, 538 residues long: C-22 sterol desaturase ERG5 (538 aa).

Residues 46-66 (LKIFATLICILLVWDQVAYQI) traverse the membrane as a helical segment. Residues K164 and K198 each participate in a glycyl lysine isopeptide (Lys-Gly) (interchain with G-Cter in ubiquitin) cross-link. C476 contributes to the heme binding site.

It belongs to the cytochrome P450 family. Interacts with ERG28. Heme is required as a cofactor.

The protein localises to the endoplasmic reticulum membrane. The enzyme catalyses 5-dehydroepisterol + NADPH + O2 + H(+) = ergosta-5,7,22,24(28)-tetraen-3beta-ol + NADP(+) + 2 H2O. It functions in the pathway steroid metabolism; ergosterol biosynthesis; ergosterol from zymosterol: step 4/5. Its function is as follows. C-22 sterol desaturase; part of the third module of ergosterol biosynthesis pathway that includes the late steps of the pathway. ERG5 converts 5-dehydroepisterol into ergosta-5,7,22,24(28)-tetraen-3beta-ol by forming the C-22(23) double bond in the sterol side chain. The third module or late pathway involves the ergosterol synthesis itself through consecutive reactions that mainly occur in the endoplasmic reticulum (ER) membrane. Firstly, the squalene synthase ERG9 catalyzes the condensation of 2 farnesyl pyrophosphate moieties to form squalene, which is the precursor of all steroids. Squalene synthase is crucial for balancing the incorporation of farnesyl diphosphate (FPP) into sterol and nonsterol isoprene synthesis. Secondly, the squalene epoxidase ERG1 catalyzes the stereospecific oxidation of squalene to (S)-2,3-epoxysqualene, which is considered to be a rate-limiting enzyme in steroid biosynthesis. Then, the lanosterol synthase ERG7 catalyzes the cyclization of (S)-2,3 oxidosqualene to lanosterol, a reaction that forms the sterol core. In the next steps, lanosterol is transformed to zymosterol through a complex process involving various demethylation, reduction and desaturation reactions. The lanosterol 14-alpha-demethylase ERG11 (also known as CYP51) catalyzes C14-demethylation of lanosterol to produce 4,4'-dimethyl cholesta-8,14,24-triene-3-beta-ol, which is critical for ergosterol biosynthesis. The C-14 reductase ERG24 reduces the C14=C15 double bond of 4,4-dimethyl-cholesta-8,14,24-trienol to produce 4,4-dimethyl-cholesta-8,24-dienol. 4,4-dimethyl-cholesta-8,24-dienol is substrate of the C-4 demethylation complex ERG25-ERG26-ERG27 in which ERG25 catalyzes the three-step monooxygenation required for the demethylation of 4,4-dimethyl and 4alpha-methylsterols, ERG26 catalyzes the oxidative decarboxylation that results in a reduction of the 3-beta-hydroxy group at the C-3 carbon to an oxo group, and ERG27 is responsible for the reduction of the keto group on the C-3. ERG28 has a role as a scaffold to help anchor ERG25, ERG26 and ERG27 to the endoplasmic reticulum and ERG29 regulates the activity of the iron-containing C4-methylsterol oxidase ERG25. Then, the sterol 24-C-methyltransferase ERG6 catalyzes the methyl transfer from S-adenosyl-methionine to the C-24 of zymosterol to form fecosterol. The C-8 sterol isomerase ERG2 catalyzes the reaction which results in unsaturation at C-7 in the B ring of sterols and thus converts fecosterol to episterol. The sterol-C5-desaturase ERG3 then catalyzes the introduction of a C-5 double bond in the B ring to produce 5-dehydroepisterol. The C-22 sterol desaturase ERG5 further converts 5-dehydroepisterol into ergosta-5,7,22,24(28)-tetraen-3beta-ol by forming the C-22(23) double bond in the sterol side chain. Finally, ergosta-5,7,22,24(28)-tetraen-3beta-ol is substrate of the C-24(28) sterol reductase ERG4 to produce ergosterol. The protein is C-22 sterol desaturase ERG5 of Saccharomyces cerevisiae (strain ATCC 204508 / S288c) (Baker's yeast).